Consider the following 96-residue polypeptide: DNA-binding protein Saci_1468 (96 aa).

The protein belongs to the PDCD5 family.

The protein is DNA-binding protein Saci_1468 of Sulfolobus acidocaldarius (strain ATCC 33909 / DSM 639 / JCM 8929 / NBRC 15157 / NCIMB 11770).